Here is a 697-residue protein sequence, read N- to C-terminus: Glycine--tRNA ligase beta subunit (697 aa).

Belongs to the class-II aminoacyl-tRNA synthetase family. Tetramer of two alpha and two beta subunits.

It localises to the cytoplasm. The enzyme catalyses tRNA(Gly) + glycine + ATP = glycyl-tRNA(Gly) + AMP + diphosphate. The polypeptide is Glycine--tRNA ligase beta subunit (Solidesulfovibrio magneticus (strain ATCC 700980 / DSM 13731 / RS-1) (Desulfovibrio magneticus)).